Reading from the N-terminus, the 398-residue chain is Acetate kinase (398 aa).

Mg(2+) is bound at residue Asn-7. Residue Lys-14 coordinates ATP. Arg-91 is a binding site for substrate. Catalysis depends on Asp-148, which acts as the Proton donor/acceptor. ATP-binding positions include 208-212 (HIGNG), 283-285 (DMR), and 331-335 (GVGEN). Residue Glu-384 participates in Mg(2+) binding.

This sequence belongs to the acetokinase family. Homodimer. The cofactor is Mg(2+). It depends on Mn(2+) as a cofactor.

It localises to the cytoplasm. It carries out the reaction acetate + ATP = acetyl phosphate + ADP. Its pathway is metabolic intermediate biosynthesis; acetyl-CoA biosynthesis; acetyl-CoA from acetate: step 1/2. In terms of biological role, catalyzes the formation of acetyl phosphate from acetate and ATP. Can also catalyze the reverse reaction. In Bacteroides fragilis (strain ATCC 25285 / DSM 2151 / CCUG 4856 / JCM 11019 / LMG 10263 / NCTC 9343 / Onslow / VPI 2553 / EN-2), this protein is Acetate kinase.